We begin with the raw amino-acid sequence, 459 residues long: uncharacterized protein (459 aa).

The next 12 helical transmembrane spans lie at 25 to 45, 52 to 72, 95 to 115, 123 to 143, 167 to 187, 192 to 212, 249 to 269, 279 to 299, 310 to 330, 332 to 352, 389 to 409, and 420 to 440; these read SYGF…IYLL, AGIP…FAAI, PYLL…FLSP, LIYA…VNIP, IGSL…LVKF, VGYP…FYIC, VLMT…LVYF, LMAY…VFLP, TAMI…MLPS, VYVF…PNGI, SLSG…PNAV, and ALLL…IGFL.

It belongs to the sodium:galactoside symporter (TC 2.A.2) family.

Its subcellular location is the cell membrane. This is an uncharacterized protein from Bacillus subtilis (strain 168).